A 906-amino-acid polypeptide reads, in one-letter code: Interference hedgehog (906 aa).

The signal sequence occupies residues 1–20; sequence MSPLTSSLLLFSLLTSSLEA. Residues 21–715 are Extracellular-facing; that stretch reads IPVLQPSFPP…SHNETVSMSP (695 aa). Ig-like C2-type domains lie at 39–144, 134–236, 252–341, and 346–433; these read PGVR…TARL, PLVV…ISSS, PHLL…INVT, and PRIT…LQVN. Cys62 and Cys128 form a disulfide bridge. 4 N-linked (GlcNAc...) asparagine glycosylation sites follow: Asn85, Asn104, Asn148, and Asn209. 2 disulfide bridges follow: Cys173-Cys220 and Cys276-Cys324. Residues Asn339 and Asn388 are each glycosylated (N-linked (GlcNAc...) asparagine). Residues Cys367 and Cys415 are joined by a disulfide bond. Positions 427–439 are enriched in polar residues; that stretch reads GTLLQVNPKQIQS. Residues 427–476 form a disordered region; the sequence is GTLLQVNPKQIQSEPRETGSGGGFGSHRSMKPVNHGQKPTKMIPPSPPNV. 2 consecutive Fibronectin type-III domains span residues 470 to 578 and 586 to 681; these read PPSP…LQPG and VPEL…TQRP. Asn475 is a glycosylation site (N-linked (GlcNAc...) asparagine). Heparin contacts are provided by Arg506, Lys512, Lys514, and Arg552. The N-linked (GlcNAc...) asparagine glycan is linked to Asn568. The segment at 673 to 713 is disordered; the sequence is LKQGRTQRPRASTTEEPTIQGIGDRDTTSHNQPSHNETVSM. Polar residues-rich tracts occupy residues 676-689 and 701-713; these read GRTQ…TEEP and SHNQ…TVSM. A helical membrane pass occupies residues 716–736; that stretch reads MLTGTIGGGALLLILLVSAFL. At 737–906 the chain is on the cytoplasmic side; sequence CMCRRRSPRG…SSGSLNSVGV (170 aa). The tract at residues 789 to 906 is disordered; that stretch reads AQQQQQQLDE…SSGSLNSVGV (118 aa). Composition is skewed to low complexity over residues 854–866 and 890–906; these read GNNN…SEAG and SSRS…SVGV.

The protein belongs to the immunoglobulin superfamily. IHOG family. As to quaternary structure, homodimer. Heterotetramer; 2 iHog chains bind 2 hh chains when facilitated by heparin, heparin is required to promote high-affinity interactions between hh and iHog.

The protein resides in the membrane. Functionally, mediates response to the active Hedgehog (Hh) protein signal in embryos, functioning upstream or at the level of patched (ptc). The protein is Interference hedgehog of Drosophila persimilis (Fruit fly).